The sequence spans 378 residues: Mitogen-activated protein kinase mpkC (378 aa).

The 281-residue stretch at 20–300 folds into the Protein kinase domain; the sequence is YVNPQPIGMG…AQDALRYPYL (281 aa). ATP-binding positions include 26 to 34 and K49; that span reads IGMGSFGLV. The active-site Proton acceptor is D141. T171 carries the post-translational modification Phosphothreonine. A TXY motif is present at residues 171 to 173; that stretch reads TGY. At Y173 the chain carries Phosphotyrosine.

Belongs to the protein kinase superfamily. Ser/Thr protein kinase family. MAP kinase subfamily. HOG1 sub-subfamily. Interacts with sakA upon osmotic and cell wall stresses. Mg(2+) is required as a cofactor. In terms of processing, dually phosphorylated on Thr-171 and Tyr-173, which activates the enzyme.

It is found in the cytoplasm. The protein resides in the nucleus. It catalyses the reaction L-seryl-[protein] + ATP = O-phospho-L-seryl-[protein] + ADP + H(+). It carries out the reaction L-threonyl-[protein] + ATP = O-phospho-L-threonyl-[protein] + ADP + H(+). Activated by tyrosine and threonine phosphorylation. In terms of biological role, mitogen-activated protein kinase; part of an osmotic and general signal pathways involved in regulation of the response to the cell wall damage, oxidative stress, drug resistance, and establishment of infection. Required for growth on media where sorbitol or mannitol is the sole carbon source. With sakA, plays a redundant or cooperative role in the conidial stress resistance. Also plays a supportive role in osmotic stress adaptation when sakA is deficient. Involved in paradoxical growth, the cell wall integrity (CWI) pathway and biofilm formation. Acts by modulating sakA activity upon exposure to several types o stresses and during cell wall biosynthesis. Also collaborates with sakA to allow ful virulence in a neutropenic murine model of invasive pulmonary aspergillosis. MpkC and sakA have both independent and collaborative functions during the transcriptional response to transient osmotic stress, and mpkC plays a major role in the modulation of the response to DNA metabolism while activating mitochondrial functions and cation transport. The chain is Mitogen-activated protein kinase mpkC (mpkC) from Aspergillus fumigatus (strain ATCC MYA-4609 / CBS 101355 / FGSC A1100 / Af293) (Neosartorya fumigata).